The following is a 318-amino-acid chain: MDSEIAFDYSPRFRIFKNGGIERLVPETFVPPSLNPENGVVSKDAVYSPEKNLSLRIYLPQNSVYETGEKKIPLLVYFHGGGFIMETAFSPIYHTFLTSAVSATDCIAVSVEYRRAPEHPIPTLYEDSWDAIQWIFTHITRSGPEDWLNKHADFSKVFLAGDSAGANIAHHMAIRVDKEKLPPENFKISGMILFHPYFLSKALIEEMEVEAMRYYERLWRIASPDSGNGVEDPWINVVGSDLTGLGCRRVLVMVAGNDVLARGGWSYVAELEKSGWIGKVKVMETKEEGHVFHLRDPDSENARRVLRNFAEFLKEETF.

M1 carries the post-translational modification N-acetylmethionine. Positions 79-81 match the Involved in the stabilization of the negatively charged intermediate by the formation of the oxyanion hole motif; sequence HGG. Residues S163, D258, and H290 contribute to the active site.

The protein belongs to the 'GDXG' lipolytic enzyme family. In terms of tissue distribution, expressed in roots, stems, flowers and siliques.

It catalyses the reaction a carboxylic ester + H2O = an alcohol + a carboxylate + H(+). Its function is as follows. Carboxylesterase acting on esters with varying acyl chain length. This is Probable carboxylesterase 1 (CXE1) from Arabidopsis thaliana (Mouse-ear cress).